We begin with the raw amino-acid sequence, 84 residues long: Putative membrane protein insertion efficiency factor (84 aa).

Belongs to the UPF0161 family.

Its subcellular location is the cell inner membrane. In terms of biological role, could be involved in insertion of integral membrane proteins into the membrane. This Shewanella denitrificans (strain OS217 / ATCC BAA-1090 / DSM 15013) protein is Putative membrane protein insertion efficiency factor.